Reading from the N-terminus, the 419-residue chain is Elongation factor Tu, chloroplastic (419 aa).

One can recognise a tr-type G domain in the interval 10-214; sequence KPHVNIGTIG…TVDEHIPTPK (205 aa). Positions 19–26 are G1; it reads GHVDHGKT. 19–26 lines the GTP pocket; that stretch reads GHVDHGKT. Thr-26 contacts Mg(2+). The tract at residues 60–64 is G2; it reads GITIN. The interval 81-84 is G3; it reads DCPG. GTP-binding positions include 81-85 and 136-139; these read DCPGH and NKAD. The interval 136–139 is G4; that stretch reads NKAD. Residues 174-176 form a G5 region; it reads SAL.

Belongs to the TRAFAC class translation factor GTPase superfamily. Classic translation factor GTPase family. EF-Tu/EF-1A subfamily.

Its subcellular location is the plastid. The protein resides in the chloroplast. It carries out the reaction GTP + H2O = GDP + phosphate + H(+). GTP hydrolase that promotes the GTP-dependent binding of aminoacyl-tRNA to the A-site of ribosomes during protein biosynthesis. The chain is Elongation factor Tu, chloroplastic (tufA) from Stigeoclonium helveticum (Green alga).